A 334-amino-acid chain; its full sequence is Transposase for insertion sequence element IS1328 (334 aa).

It belongs to the transposase IS1111A/IS1328/IS1533 family.

In terms of biological role, required for the transposition of the insertion element. In Yersinia enterocolitica, this protein is Transposase for insertion sequence element IS1328.